The sequence spans 311 residues: Ribosomal protein L11 methyltransferase (311 aa).

4 residues coordinate S-adenosyl-L-methionine: threonine 163, glycine 184, aspartate 206, and asparagine 248.

The protein belongs to the methyltransferase superfamily. PrmA family.

It is found in the cytoplasm. It catalyses the reaction L-lysyl-[protein] + 3 S-adenosyl-L-methionine = N(6),N(6),N(6)-trimethyl-L-lysyl-[protein] + 3 S-adenosyl-L-homocysteine + 3 H(+). In terms of biological role, methylates ribosomal protein L11. This chain is Ribosomal protein L11 methyltransferase, found in Clostridium acetobutylicum (strain ATCC 824 / DSM 792 / JCM 1419 / IAM 19013 / LMG 5710 / NBRC 13948 / NRRL B-527 / VKM B-1787 / 2291 / W).